The chain runs to 520 residues: MQRDTSLRDPFATEDESSASEIGRAPERRLRIPQNQLRNADERCEIRSPQPVPGPGLPRSIAVRTETAATSKDAPAPAPSLRLSLGLPRSRTKAHSGQTSDATNITSTARQADDAVRNTDSDALLSRLSALKLGYLPSEPFTQEFSSTLPSNGGHPTGRSGFPQPHHPGSSIRRSPLINIGTYLRCSTIDAEVESFLRQGCEQKQIISVGAGSDSRYWRIMADTDLSRRLHHYVEIDFEENTSQKLSRILKSPILRASLDTNSSVYGVPLSHLSQFSLGVPCHTGSESRQFDVIRSSKYSLLAADVRSLHPDTPSAERIDLEHLLGPASTGLDSTLPTLILFECVLAYIAPDRADWLIRHLGQRFAAVQALSYDIALAGDAHPSAKAVACVSSESESSECGQTVGTADSAISTSTTVASPAPPSRFGRVMLQNLEMRKLSLPGARAYPTIHAQSQRFAQAWSDSQALQIETSGRSLFSIWSDLGAEQRSRLSRLEGLDEVEEIDMLLQHYCIVQARRQRP.

Disordered stretches follow at residues 1–116 and 142–174; these read MQRD…DDAV and TQEF…SIRR. Low complexity predominate over residues 79–89; sequence PSLRLSLGLPR. 2 stretches are compositionally biased toward polar residues: residues 95-110 and 142-151; these read HSGQ…STAR and TQEFSSTLPS. Residues R185, G210, D237, 305–306, and E343 contribute to the S-adenosyl-L-methionine site; that span reads DV.

The protein belongs to the methyltransferase superfamily. LCMT family.

The enzyme catalyses [phosphatase 2A protein]-C-terminal L-leucine + S-adenosyl-L-methionine = [phosphatase 2A protein]-C-terminal L-leucine methyl ester + S-adenosyl-L-homocysteine. Functionally, methylates the carboxyl group of the C-terminal leucine residue of protein phosphatase 2A catalytic subunits to form alpha-leucine ester residues. The chain is Leucine carboxyl methyltransferase 1 (PPM1) from Mycosarcoma maydis (Corn smut fungus).